A 291-amino-acid polypeptide reads, in one-letter code: Bifunctional protein FolD (291 aa).

NADP(+) is bound by residues 173-175 (GRS) and S198.

It belongs to the tetrahydrofolate dehydrogenase/cyclohydrolase family. In terms of assembly, homodimer.

The enzyme catalyses (6R)-5,10-methylene-5,6,7,8-tetrahydrofolate + NADP(+) = (6R)-5,10-methenyltetrahydrofolate + NADPH. It carries out the reaction (6R)-5,10-methenyltetrahydrofolate + H2O = (6R)-10-formyltetrahydrofolate + H(+). Its pathway is one-carbon metabolism; tetrahydrofolate interconversion. Its function is as follows. Catalyzes the oxidation of 5,10-methylenetetrahydrofolate to 5,10-methenyltetrahydrofolate and then the hydrolysis of 5,10-methenyltetrahydrofolate to 10-formyltetrahydrofolate. The polypeptide is Bifunctional protein FolD (Psychrobacter sp. (strain PRwf-1)).